The sequence spans 491 residues: MFCSAQKGSCSSRVSSSGAVGSRGCTGSGSSYGLGGGSAWGFQGSSSSWGLSGGSKGSIGGGFSSCSVRGGFGAGSSFGGGSGFGGGSSGGVSSYGGSLGGGLGGIGGYDGGLLSGSEKQTMQGLNDRLANYLDKVRALEEANTDLETKIKDWYGRHGSGKDGPGRDYSQYCSVIEDLKNQIISATCENARLALQIDNARLAADDFRMKYEHELCLRQSLEADINGLRKVLDEMTMTRCDLEMQIEGLTEELVFLRKNHEEEMKCLQGSSGGDVTVEMNATPGTDLTKLLNDMRAQYEAMAEQNRQEAEKQFNERSACLQAQISTDAGAANCAKSEVMELRRTVQTLEIELQSQLALKCSLEGTLADTEARYVAQLSGIQTQISSLEEQLSQIRGETQCQSAEYECLLDIKTRLEQEIETYRRLLNGDGGGCDYRNLVSRQVVLNDSNFGSCSGQEKDPSKTRVTKTIIEEVVDGKVVSSQVSNISEVKIK.

Positions 1–23 (MFCSAQKGSCSSRVSSSGAVGSR) are disordered. The interval 1-117 (MFCSAQKGSC…GYDGGLLSGS (117 aa)) is head. The segment covering 8-23 (GSCSSRVSSSGAVGSR) has biased composition (low complexity). Positions 118-153 (EKQTMQGLNDRLANYLDKVRALEEANTDLETKIKDW) are coil 1A. Residues 118 to 432 (EKQTMQGLND…RLLNGDGGGC (315 aa)) enclose the IF rod domain. Residues 154-174 (YGRHGSGKDGPGRDYSQYCSV) are linker 1. Positions 175–266 (IEDLKNQIIS…KNHEEEMKCL (92 aa)) are coil 1B. Residues 267–289 (QGSSGGDVTVEMNATPGTDLTKL) are linker 12. The interval 290–428 (LNDMRAQYEA…ETYRRLLNGD (139 aa)) is coil 2. The tail stretch occupies residues 429-491 (GGGCDYRNLV…VSNISEVKIK (63 aa)).

The protein belongs to the intermediate filament family. Heterotetramer of two type I and two type II keratins.

The polypeptide is Keratin, type I cytoskeletal 24 (Krt24) (Rattus norvegicus (Rat)).